Consider the following 391-residue polypeptide: tRNA (cytosine(38)-C(5))-methyltransferase (391 aa).

Residues 4–391 (LRVLELYSGV…VAKLIKILYE (388 aa)) form the SAM-dependent MTase C5-type domain. S-adenosyl-L-methionine-binding positions include 13–15 (VGG), Asp34, 57–58 (IE), and Ser76. Cys79 is a catalytic residue. Residue Ser376 participates in S-adenosyl-L-methionine binding.

It belongs to the class I-like SAM-binding methyltransferase superfamily. C5-methyltransferase family. In terms of tissue distribution, ubiquitous. Higher expression in testis, ovary and thymus and at much lower levels in spleen, prostate, colon, small intestine, and peripheral blood leukocytes.

The protein resides in the cytoplasm. It carries out the reaction cytidine(38) in tRNA + S-adenosyl-L-methionine = 5-methylcytidine(38) in tRNA + S-adenosyl-L-homocysteine + H(+). Its function is as follows. Specifically methylates cytosine 38 in the anticodon loop of tRNA(Asp). Has higher activity on tRNA(Asp) modified with queuosine at position 34. The protein is tRNA (cytosine(38)-C(5))-methyltransferase (TRDMT1) of Homo sapiens (Human).